The chain runs to 812 residues: Fibroblast growth factor receptor 1 (812 aa).

The N-terminal stretch at 1 to 20 (MFSGMSLLLWGVLLGAALSV) is a signal peptide. At 21–371 (ARPPSTLPDE…PALLASPLQL (351 aa)) the chain is on the extracellular side. In terms of domain architecture, Ig-like C2-type 1 spans 25–118 (STLPDEVAPK…YTVLCSVNVS (94 aa)). A disulfide bridge links Cys54 with Cys100. 9 N-linked (GlcNAc...) asparagine glycosylation sites follow: Asn76, Asn116, Asn133, Asn223, Asn236, Asn260, Asn292, Asn313, and Asn326. The segment at 121-153 (LPSAEDDDEDDDNSSSEEKAAENSKPNRPLWSH) is disordered. A compositionally biased stretch (acidic residues) spans 124-135 (AEDDDEDDDNSS). Ig-like C2-type domains follow at residues 154–242 (PEKM…YQLD) and 251–353 (PILQ…AWLT). A disulfide bridge links Cys174 with Cys226. Residues Cys273 and Cys337 are joined by a disulfide bond. The helical transmembrane segment at 372-393 (EIIIYCTGAAFVSAMVVTIIIF) threads the bilayer. Topologically, residues 394–812 (KMKHPSKKSD…KYSNGGLKKR (419 aa)) are cytoplasmic. Tyr457 is modified (phosphotyrosine; by autocatalysis). Residues 472–761 (LILGKPLGEG…LALSSNQEYL (290 aa)) form the Protein kinase domain. ATP contacts are provided by residues 478–484 (LGEGCFG), Lys508, 556–558 (EYT), and Asn562. Tyr577 and Tyr579 each carry phosphotyrosine; by autocatalysis. The active-site Proton acceptor is Asp617. Residues Arg621 and Asp635 each contribute to the ATP site. A phosphotyrosine; by autocatalysis mark is found at Tyr647, Tyr648, Tyr724, and Tyr760. The disordered stretch occupies residues 784 to 812 (SGEDSMFSHDPLPDEPCLPKYSNGGLKKR).

Belongs to the protein kinase superfamily. Tyr protein kinase family. Fibroblast growth factor receptor subfamily. As to quaternary structure, monomer. Homodimer after ligand binding. Interacts with il17rd. In terms of processing, autophosphorylated. Binding of FGF family members together with heparan sulfate proteoglycan or heparin promotes receptor dimerization and autophosphorylation on tyrosine residues. Autophosphorylation occurs in trans between the two FGFR molecules present in the dimer and proceeds in a highly ordered manner. Phosphotyrosine residues provide docking sites for interacting proteins and so are crucial for FGFR1 function and its regulation. Ubiquitinated. FGFR1 is rapidly ubiquitinated after autophosphorylation, leading to internalization and degradation. Post-translationally, N-glycosylated in the endoplasmic reticulum. The N-glycan chains undergo further maturation to an Endo H-resistant form in the Golgi apparatus.

It is found in the cell membrane. The protein localises to the nucleus. It localises to the cytoplasm. The protein resides in the cytosol. Its subcellular location is the cytoplasmic vesicle. The enzyme catalyses L-tyrosyl-[protein] + ATP = O-phospho-L-tyrosyl-[protein] + ADP + H(+). Its activity is regulated as follows. Present in an inactive conformation in the absence of bound ligand. Ligand binding leads to dimerization and activation by sequential autophosphorylation on tyrosine residues. Tyrosine-protein kinase that acts as a cell-surface receptor for fibroblast growth factors and plays an essential role in the regulation of embryonic development, cell proliferation, differentiation and migration. Required for normal mesoderm patterning and normal skeletogenesis. Phosphorylates PLCG1, FRS2, GAB1 and SHB. Ligand binding leads to the activation of several signaling cascades. Activation of PLCG1 leads to the production of the cellular signaling molecules diacylglycerol and inositol-1,4,5-trisphosphate. Phosphorylation of FRS2 triggers recruitment of GRB2, GAB1, PIK3R1 and SOS1, and mediates activation of RAS, MAPK1/ERK2, MAPK3/ERK1 and the MAP kinase signaling pathway, as well as of the AKT1 signaling pathway. Promotes phosphorylation of SHC1, STAT1 and PTPN11/SHP2. In the nucleus, enhances RPS6KA1 and CREB1 activity and contributes to the regulation of transcription. FGFR1 signaling is down-regulated by ubiquitination, internalization and degradation. This chain is Fibroblast growth factor receptor 1 (fgfr1), found in Xenopus laevis (African clawed frog).